The sequence spans 224 residues: Urease accessory protein UreF (224 aa).

The protein belongs to the UreF family. As to quaternary structure, ureD, UreF and UreG form a complex that acts as a GTP-hydrolysis-dependent molecular chaperone, activating the urease apoprotein by helping to assemble the nickel containing metallocenter of UreC. The UreE protein probably delivers the nickel.

It localises to the cytoplasm. Functionally, required for maturation of urease via the functional incorporation of the urease nickel metallocenter. This Pseudomonas putida (strain ATCC 47054 / DSM 6125 / CFBP 8728 / NCIMB 11950 / KT2440) protein is Urease accessory protein UreF.